The chain runs to 301 residues: Transcription factor bHLH103 (301 aa).

One can recognise a KRAB domain in the interval 29-106 (PRSAEIVVDF…LEGLFDSSEQ (78 aa)). Disordered stretches follow at residues 161–184 (EKSG…ETPS) and 239–272 (TSPH…PRQD). Residues 180–229 (LETPSHFPSFKVRKEKLGDRITALQQLVSPFGKTDTASVLHDAIDYIKFL) form the bHLH domain. The segment covering 239-269 (TSPHLNSIGSGEQKQWSDKSSNNTHNQNCSP) has biased composition (polar residues).

Homodimer. In terms of tissue distribution, mature root endodermis.

It is found in the nucleus. The sequence is that of Transcription factor bHLH103 (BHLH103) from Arabidopsis thaliana (Mouse-ear cress).